A 941-amino-acid chain; its full sequence is MSLTTAAPLLALLKEKDAEVKAYALQSINEGVDQFWSEVSNDLPEIEALYDDNGFQDRKMAALIASKVYYNLGEYESAVKYALAAEEKFDIDEKTQYVETIVSKSIEMYIKLATEIYNKSGEQVNLDPKLTIVFEKMMTKCTQANEYKLALGIALEAFRLDVVKSILQERLGEDQEGGSMKLMSYVLTAATTTVFNSKFKDEILRLLFDLLMPLKNADYFITSKVVVNLNDPELATQLFEKLHDEEQIEVSYQIAFDLVSSASQHLLEKLHHNLSERSYDSGLLEILTGIPTCDYYNTFLLNKKNIDISLLNKSKSSLDGKFSLFHTAVSVSNGYMHAGTTDNSFIKANLSWLGKAQNWAKFSATASLGVIHKGNLIDGKKVMAPYLPGSRSSSRFIKGGSLYGLGLIYAGFGRDIVDYLKTHLIENSGTTGDEDVDVLLHGASLGVGLAAMGTANNEVYEALKDVLYNDVATSGEAAAFGIGLTLLGTGDETAINDLFTYAQETSHGNITRGLSMALALINYGRQEQADELIDKMLASENSLIRYGGAFSIALAYVGTGNNKVVKKLLHLAVSDSNDDVRRAAVTALGFVLLRDYTTVPRIVQLLAESHNAHDRCGAAFALGIACAGKGLQAAIDVLEPMTKDPADFVRQAAMISLSLVMIQQTEKMNPKVASINSHFLSVITNKHQEGLAKFGACVALGIMNAGGRNVTIQLENAETGTLDTKSVVGLAMFTQFWYWFPMAHFLSLSFTPTTIVGVRGSDLNIPKFDMNCYAREDVFSYPKMFEESADKEVEKVATAILSTTARAKARAKKTKKEKDTNEDDKKKKEKDLKKEETKKDDAKKESEAEEDFNKNRYSSKPYKIENMSRVLPQQLKYVQFIKEERFTPVRKFKGTNGVVVLKDNKPSEPASIIETVRQSKDVNAPLPTPFKVTEELDFEKI.

10 PC repeats span residues 363 to 396 (SATASLGVIHKGNLIDGKKVMAPYLPGSRSSSRF), 400 to 437 (GSLYGLGLIYAGFGRDIVDYLKTHLIENSGTTGDEDVD), 442 to 476 (GASLGVGLAAMGTANNEVYEALKDVLYNDVATSGE), 477 to 511 (AAAFGIGLTLLGTGDETAINDLFTYAQETSHGNIT), 513 to 546 (GLSMALALINYGRQEQADELIDKMLASENSLIRY), 547 to 582 (GGAFSIALAYVGTGNNKVVKKLLHLAVSDSNDDVRR), 583 to 615 (AAVTALGFVLLRDYTTVPRIVQLLAESHNAHDR), 617 to 651 (GAAFALGIACAGKGLQAAIDVLEPMTKDPADFVRQ), 652 to 689 (AAMISLSLVMIQQTEKMNPKVASINSHFLSVITNKHQE), and 695 to 731 (GACVALGIMNAGGRNVTIQLENAETGTLDTKSVVGLA). The segment at 808–854 (KARAKKTKKEKDTNEDDKKKKEKDLKKEETKKDDAKKESEAEEDFNK) is disordered. Residues 816 to 854 (KEKDTNEDDKKKKEKDLKKEETKKDDAKKESEAEEDFNK) show a composition bias toward basic and acidic residues.

The protein belongs to the proteasome subunit S1 family.

Its function is as follows. Acts as a regulatory subunit of the 26S proteasome which is involved in the ATP-dependent degradation of ubiquitinated proteins. In Candida glabrata (strain ATCC 2001 / BCRC 20586 / JCM 3761 / NBRC 0622 / NRRL Y-65 / CBS 138) (Yeast), this protein is 26S proteasome regulatory subunit RPN2 (RPN2).